We begin with the raw amino-acid sequence, 544 residues long: Protein angel homolog 2 (544 aa).

The protein belongs to the CCR4/nocturin family.

The polypeptide is Protein angel homolog 2 (ANGEL2) (Bos taurus (Bovine)).